A 135-amino-acid chain; its full sequence is MVKMINLLVVENNNSNWDKIFSFVFDIFLFIFDVIWNTKLPMTNTSIAYFLVFFMVIKLSIYAIHGTSTQYNNLGSTVNNGVSQVYSSTVRKGINVGKNVYQNSNKQQVKKELKRQSIRYQAKNIRSTKFKGDKK.

Transmembrane regions (helical) follow at residues 20 to 40 and 47 to 67; these read IFSF…NTKL and IAYF…IHGT.

It belongs to the plectrovirus ORF5 family.

It localises to the host membrane. This is an uncharacterized protein from Spiroplasma virus SpV1-C74 (SpV1).